Reading from the N-terminus, the 72-residue chain is uncharacterized protein (72 aa).

A helical membrane pass occupies residues 11–31; sequence WCCTVLSAFGVVILSVIAHLF.

Its subcellular location is the membrane. This is an uncharacterized protein from Saccharomyces cerevisiae (strain ATCC 204508 / S288c) (Baker's yeast).